Here is a 271-residue protein sequence, read N- to C-terminus: uncharacterized protein (271 aa).

A signal peptide spans 1–22 (MIHSKRLKLCLCLIILSVFIGA). Cys23 carries N-palmitoyl cysteine lipidation. Residue Cys23 is the site of S-diacylglycerol cysteine attachment.

The protein belongs to the staphylococcal tandem lipoprotein family.

The protein resides in the cell membrane. This is an uncharacterized protein from Staphylococcus aureus (strain MW2).